Consider the following 995-residue polypeptide: DNA repair protein Rev1 (995 aa).

Residues 35–121 (RKSDLFQGIS…KIVDYKPYLL (87 aa)) enclose the BRCT domain. 2 disordered regions span residues 135–164 (GKPK…DSTK) and 182–211 (VATS…TTAR). Over residues 136–164 (KPKDNGANESKSDVEPPKDKAEVEVDSTK) the composition is skewed to basic and acidic residues. The span at 192-211 (ASESKITNLSTTSNNSTTAR) shows a compositional bias: low complexity. Positions 275–505 (VMHIDMDCFF…MSLDLLPGVG (231 aa)) constitute a UmuC domain. Asp279 provides a ligand contact to Mg(2+). Residues 361 to 367 (SCSYEAR), Asn373, and Asp421 contribute to the dCTP site. Asp421 is a binding site for Mg(2+). Glu422 is an active-site residue. The interaction with PolI stretch occupies residues 696 to 868 (SEMRKDKPIP…HYIRSDQIVA (173 aa)). The interval 878 to 995 (VNPHILKLIS…IEYIRCIKCS (118 aa)) is interaction with PolH/DNApol-eta.

It belongs to the DNA polymerase type-Y family. As to quaternary structure, interacts (via C-terminus) with PolH/DNApol-eta (via C-terminal regions). Interacts (via C-terminus) with PolI. It depends on Mg(2+) as a cofactor.

It is found in the nucleus. In terms of biological role, deoxycytidyl transferase involved in DNA repair. Transfers a dCMP residue from dCTP to the 3'-end of a DNA primer in a template-dependent reaction. May assist in the first step in the bypass of abasic lesions by the insertion of a nucleotide opposite the lesion. Required for normal induction of mutations by physical and chemical agents. During homologous recombination (HR) repair of DNA double-strand breaks (DSBs) regulates the extent of repair synthesis. Possibly recruits the DNA polymerase zeta complex or another translesion polymerase to early DSB repair intermediates to initiate repair synthesis, while also blocking the access of more processive polymerases preventing them from acting during the initial stages of HR repair. This chain is DNA repair protein Rev1, found in Drosophila melanogaster (Fruit fly).